The chain runs to 271 residues: DNA repair protein RecO (271 aa).

The protein belongs to the RecO family.

Involved in DNA repair and RecF pathway recombination. This chain is DNA repair protein RecO, found in Synechococcus sp. (strain CC9311).